The following is a 500-amino-acid chain: MSDLKTESQDLQQEENALIALRKEKLAAERAKGNAFPNDFRRDSYCNDLQKQYADKTKEELEAAAIPVKVAGRIMLNRGSFMVIQDMTGRIQVYVNRKTLPEETLAAVKTWDLGDIISAEGTLARSGKGDLYVEMTNVRLLTKSLRPLPDKHHGLTDTEQRYRQRYVDLMVNEETRHTFRVRSQVISHIRKFLIERDFLEVETPMLQTIPGGAAAKPFETHHNALDMAMFLRIAPELYLKRLVVGGFEKVFEINRNFRNEGVSTRHNPEFTMLEFYQAYADYRDNMDLTEELFRELAQLVLGSTDVPYGDKVFHFGEPFVRLSVFDSILKYNPELTAADLQDVDRAREIARKAGAKVLGHEGLGKLQVMIFEELVEHKLEQPHFITEYPFEVSPLARRNDDNPAVTDRFELFIGGREIANAYSELNDAEDQAERFLAQVAEKDAGDDEAMHYDADFVRALEYGMPPTAGEGIGIDRLVMLLTNSPSIRDVILFPHMRPQA.

Mg(2+) contacts are provided by E410 and E417.

It belongs to the class-II aminoacyl-tRNA synthetase family. As to quaternary structure, homodimer. The cofactor is Mg(2+).

The protein localises to the cytoplasm. It catalyses the reaction tRNA(Lys) + L-lysine + ATP = L-lysyl-tRNA(Lys) + AMP + diphosphate. This Pseudomonas putida (strain ATCC 47054 / DSM 6125 / CFBP 8728 / NCIMB 11950 / KT2440) protein is Lysine--tRNA ligase.